A 138-amino-acid polypeptide reads, in one-letter code: Cysteine desulfuration protein SufE (138 aa).

The active-site Cysteine persulfide intermediate is the Cys-51.

It belongs to the SufE family. In terms of assembly, homodimer. Interacts with SufS.

It localises to the cytoplasm. It functions in the pathway cofactor biosynthesis; iron-sulfur cluster biosynthesis. Participates in cysteine desulfuration mediated by SufS. Cysteine desulfuration mobilizes sulfur from L-cysteine to yield L-alanine and constitutes an essential step in sulfur metabolism for biosynthesis of a variety of sulfur-containing biomolecules. Functions as a sulfur acceptor for SufS, by mediating the direct transfer of the sulfur atom from the S-sulfanylcysteine of SufS, an intermediate product of cysteine desulfuration process. In Escherichia coli (strain K12 / MC4100 / BW2952), this protein is Cysteine desulfuration protein SufE.